Consider the following 234-residue polypeptide: Large ribosomal subunit protein uL1 (234 aa).

It belongs to the universal ribosomal protein uL1 family. As to quaternary structure, part of the 50S ribosomal subunit.

Functionally, binds directly to 23S rRNA. The L1 stalk is quite mobile in the ribosome, and is involved in E site tRNA release. Its function is as follows. Protein L1 is also a translational repressor protein, it controls the translation of the L11 operon by binding to its mRNA. This is Large ribosomal subunit protein uL1 from Serratia proteamaculans (strain 568).